The sequence spans 1515 residues: Neurite extension and migration factor (1515 aa).

Positions 381-405 (DKKKGKEEVHEDKSIETKDEKDNGE) are enriched in basic and acidic residues. 6 disordered regions span residues 381–415 (DKKKGKEEVHEDKSIETKDEKDNGEKPALNNKPCG), 505–529 (VNERKEWPPGGSKEEDDDEWCPKKR), 731–774 (KKIK…HMSE), 1158–1225 (FDEP…TKKG), 1372–1422 (TPQE…EDSR), and 1435–1479 (TLGN…AGTT). Composition is skewed to polar residues over residues 746 to 757 (SPVSEDTSSKAN) and 763 to 772 (TPGTSNSSHM). The segment covering 1180 to 1193 (PGKSGAVSQSSSQK) has biased composition (low complexity). A compositionally biased stretch (basic residues) spans 1442 to 1452 (THKKLYRHKSS). Basic and acidic residues predominate over residues 1455-1479 (GLRDEKYKGKRVEREQAHKDEAGTT).

In terms of tissue distribution, expressed in the brain, particularly during the late embryonic and perinatal stages of development. In the developing brain, it is expressed only in the cortical plate and subplate region but not in the intermediate or ventricular zone.

The protein localises to the nucleus. It localises to the cytoplasm. Functionally, involved in neurite outgrowth by regulating cell-cell adhesion via the N-cadherin signaling pathway. May act by regulating expression of protein-coding genes, such as N-cadherins and integrin beta-1 (ITGB1). In Mus musculus (Mouse), this protein is Neurite extension and migration factor.